Consider the following 223-residue polypeptide: Glutathione S-transferase A2 (223 aa).

Ala2 carries the N-acetylalanine modification. A GST N-terminal domain is found at 3 to 83 (GKPKLHYFNG…YIATKYNLYG (81 aa)). Lys4 carries the N6-succinyllysine modification. Glutathione contacts are provided by residues Tyr9, Arg45, 54-55 (QV), and 67-68 (QT). Positions 85-208 (DMKERALIDM…QPGSQRKPPM (124 aa)) constitute a GST C-terminal domain.

It belongs to the GST superfamily. Alpha family. Homodimer. As to expression, expressed in corpus luteum, adrenal gland, testis, liver, lung, thyroid and kidney.

Its subcellular location is the cytoplasm. The catalysed reaction is RX + glutathione = an S-substituted glutathione + a halide anion + H(+). Conjugation of reduced glutathione to a wide number of exogenous and endogenous hydrophobic electrophiles. The protein is Glutathione S-transferase A2 (GSTA2) of Bos taurus (Bovine).